A 1006-amino-acid chain; its full sequence is Unconventional myosin-Id (1006 aa).

A2 is modified (N-acetylalanine). Positions 9-695 constitute a Myosin motor domain; it reads FGKADFVLMD…TLFTLEELRA (687 aa). 102 to 109 lines the ATP pocket; it reads GESGAGKT. S200 carries the post-translational modification Phosphoserine. Y536 bears the Phosphotyrosine mark. Positions 572–594 are actin-binding; that stretch reads MIALVDNLASKEPYYVRCIKPND. IQ domains follow at residues 699-719 and 721-741; these read VRIV…MRYK and TKAA…SYIH. The 194-residue stretch at 812–1005 folds into the TH1 domain; it reads GQRADLGLQR…RSGFILSVPG (194 aa).

The protein belongs to the TRAFAC class myosin-kinesin ATPase superfamily. Myosin family. As to quaternary structure, interacts (via the two IQ motifs) with calmodulin. Binds an additional calmodulin chain via a third, C-terminal region. Interacts with F-actin.

It is found in the cytoplasm. The protein localises to the perikaryon. It localises to the cell projection. The protein resides in the dendrite. Its subcellular location is the early endosome. It is found in the cell cortex. Unconventional myosin that functions as actin-based motor protein with ATPase activity. Plays a role in endosomal protein trafficking, and especially in the transfer of cargo proteins from early to recycling endosomes. Required for normal planar cell polarity in ciliated tracheal cells, for normal rotational polarity of cilia, and for coordinated, unidirectional ciliary movement in the trachea. Required for normal, polarized cilia organization in brain ependymal epithelial cells. The chain is Unconventional myosin-Id (MYO1D) from Bos taurus (Bovine).